The primary structure comprises 336 residues: MIQQVQQAVFDPERFLVDIEETCRAIGAPYSQEKTLKVLEGFQASFARGAVLWRITNRPGDALNYRFYERVSIDAVSCAVEAKLFQPNHPLSELIVSWTALYPGAAQQSCDFDAEQGFSKIWVYLGDMRPLSDILSAPHVPLSIRKHATTFYNLGLELVRHVAADFTSNTINIYFRVQGLLTLERARSLVRLSDPAYLLECGEVEEMRRLLNPVGFTFAVTMDYSTGDIKRVGIYALKLAPGTYPAMDERLKATRAIPLEKQAYILLSQGVLMAKEVAAAFPVPSETAAVNRPREVDVEVGVGVASFMFQPTTPIAPTVDVRDNVVVAVFHAVESP.

The protein belongs to the aromatic prenyltransferase family.

In terms of biological role, prenyltransferase that attaches isoprenoid moieties to carbon atoms of aromatic substrates in an enzyme-catalyzed Friedel-Crafts reaction. Shows specificity for dimethylallyl diphosphate (DMAPP) and does not accept geranyl diphosphate (GPP) or isopentenyl diphosphate (IPP). Prenylates the artificial substrate 2,7-dihydroxynaphthalene (2,7-DHN), as well as dihydrophenazine-1-carboxylic acid at a lower level. Only traces of products are detected with aspulvinone E, flaviolin, or 4-hydroxybenzoic acid as substrates; and no product is formed with L-tryptophan, L-tyrosine, or 4-hydroxyphenylpyruvate. Ptf seems no to be involved in the prenylation reaction in the biosynthesis of aspulvinone H and J and the physiological function of ptf remains unknown. In Aspergillus terreus (strain NIH 2624 / FGSC A1156), this protein is Aromatic prenyltransferase.